The primary structure comprises 89 residues: Small ribosomal subunit protein uS15 (89 aa).

Belongs to the universal ribosomal protein uS15 family. Part of the 30S ribosomal subunit. Forms a bridge to the 50S subunit in the 70S ribosome, contacting the 23S rRNA.

Its function is as follows. One of the primary rRNA binding proteins, it binds directly to 16S rRNA where it helps nucleate assembly of the platform of the 30S subunit by binding and bridging several RNA helices of the 16S rRNA. Functionally, forms an intersubunit bridge (bridge B4) with the 23S rRNA of the 50S subunit in the ribosome. In Bifidobacterium longum (strain DJO10A), this protein is Small ribosomal subunit protein uS15.